Consider the following 208-residue polypeptide: Ribosome maturation factor RimP (208 aa).

The segment at 189-208 (EAPETGATTMARDGSEEETK) is disordered.

Belongs to the RimP family.

It localises to the cytoplasm. Functionally, required for maturation of 30S ribosomal subunits. This is Ribosome maturation factor RimP from Ruegeria pomeroyi (strain ATCC 700808 / DSM 15171 / DSS-3) (Silicibacter pomeroyi).